A 194-amino-acid polypeptide reads, in one-letter code: Cysteine and glycine-rich protein 3 (194 aa).

Positions 1–5 (MPNWG) are interaction with TCAP. Residues 10–61 (CGACEKTVYHAEEIQCNGRSFHKTCFHCMACRKALDSTTVAAHESEIYCKVC) form the LIM zinc-binding 1 domain. Residues 64–69 (RRYGPK) carry the Nuclear localization signal motif. The tract at residues 94–105 (QSPKPARAATTS) is interaction with CLF2. A phosphoserine mark is found at Ser95, Ser111, and Ser153. The LIM zinc-binding 2 domain occupies 120-171 (CPRCGKSVYAAEKVMGGGKPWHKTCFRCAICGKSLESTNVTDKDGELYCKVC).

In terms of assembly, self-associates. Oligomeric in the cytoplasm and monomeric in the nucleus. Homooligomers preferentially form along the actin cytoskeleton. Interacts with TCAP. Interacts with LDHD, MYOD1, MYOG, ACTN2, NRAP, MYF6. Interacts (via N-terminus)D with GLRX3 (via C-terminus) and PPP3CA; GLRX3 and calcineurin compete for interaction with CSRP3. Interacts with CFL2; the stoichiometry influences F-actin depolymerization and possibly two molecules of CFL2 can interact with one molecule of CSRP3 resulting in the highest functional impact; the interaction is stronger with phosphorylated CFL2. Phosphorylated by PKC/PRKCA.

The protein localises to the nucleus. It is found in the cytoplasm. Its subcellular location is the cytoskeleton. The protein resides in the myofibril. It localises to the sarcomere. The protein localises to the z line. Functionally, positive regulator of myogenesis. Acts as a cofactor for myogenic bHLH transcription factors such as MYOD1, and probably MYOG and MYF6. Enhances the DNA-binding activity of the MYOD1:TCF3 isoform E47 complex and may promote formation of a functional MYOD1:TCF3 isoform E47:MEF2A complex involved in myogenesis. Plays a crucial and specific role in the organization of cytosolic structures in cardiomyocytes. Could play a role in mechanical stretch sensing. May be a scaffold protein that promotes the assembly of interacting proteins at Z-line structures. It is essential for calcineurin anchorage to the Z line. Required for stress-induced calcineurin-NFAT activation. The role in regulation of cytoskeleton dynamics by association with CFL2 is reported conflictingly. Proposed to contribute to the maintenance of muscle cell integrity through an actin-based mechanism. Can directly bind to actin filaments, cross-link actin filaments into bundles without polarity selectivity and protect them from dilution- and cofilin-mediated depolymerization; the function seems to involve its self-association. In vitro can inhibit PKC/PRKCA activity. Proposed to be involved in cardiac stress signaling by down-regulating excessive PKC/PRKCA signaling. The polypeptide is Cysteine and glycine-rich protein 3 (Csrp3) (Mus musculus (Mouse)).